The chain runs to 103 residues: Large ribosomal subunit protein bL21 (103 aa).

It belongs to the bacterial ribosomal protein bL21 family. In terms of assembly, part of the 50S ribosomal subunit. Contacts protein L20.

Its function is as follows. This protein binds to 23S rRNA in the presence of protein L20. The sequence is that of Large ribosomal subunit protein bL21 from Mycolicibacterium paratuberculosis (strain ATCC BAA-968 / K-10) (Mycobacterium paratuberculosis).